The chain runs to 556 residues: Glucose-6-phosphate isomerase (556 aa).

Glu-360 acts as the Proton donor in catalysis. Residues His-391 and Lys-519 contribute to the active site.

This sequence belongs to the GPI family.

Its subcellular location is the cytoplasm. It catalyses the reaction alpha-D-glucose 6-phosphate = beta-D-fructose 6-phosphate. Its pathway is carbohydrate biosynthesis; gluconeogenesis. The protein operates within carbohydrate degradation; glycolysis; D-glyceraldehyde 3-phosphate and glycerone phosphate from D-glucose: step 2/4. Its function is as follows. Catalyzes the reversible isomerization of glucose-6-phosphate to fructose-6-phosphate. In Acinetobacter baumannii (strain SDF), this protein is Glucose-6-phosphate isomerase.